Reading from the N-terminus, the 474-residue chain is HTH-type transcriptional regulator RamB (474 aa).

Residues 10–64 (VRQLRNERGFSQAALAQMLEISPSYLNQIEHDVRPLTVAVLLRITEVFGVDATFF) form the HTH cro/C1-type domain. Positions 21 to 40 (QAALAQMLEISPSYLNQIEH) form a DNA-binding region, H-T-H motif.

The protein belongs to the short-chain fatty acyl-CoA assimilation regulator (ScfR) family.

Involved in the control of the glyoxylate cycle. RamB negatively controls the expression of icl expression during growth on acetate as the sole carbon source. In Mycobacterium tuberculosis (strain CDC 1551 / Oshkosh), this protein is HTH-type transcriptional regulator RamB.